The primary structure comprises 783 residues: Protein phosphatase 2C 29 (783 aa).

A disordered region spans residues 151 to 194 (SFSALPLQPGPDRSGLFMSGPIERGATSGPLDPPAGEISRSNSA). S199 bears the Phosphoserine mark. One can recognise a PPM-type phosphatase domain in the interval 260-770 (SSGENDLQWA…DDCTVLVIAL (511 aa)). 2 residues coordinate Mn(2+): D295 and G296. The segment at 555-595 (ETGESVETAERVEERRNDLDRDDGNKEPLVVDSSDSTVNNE) is disordered. Over residues 562–580 (TAERVEERRNDLDRDDGNK) the composition is skewed to basic and acidic residues. D701 and D761 together coordinate Mn(2+).

The protein belongs to the PP2C family. The cofactor is Mg(2+). Mn(2+) is required as a cofactor. As to expression, expressed in roots, leaves, stems, inflorescences, flowers and developing vascular tissue.

Its subcellular location is the nucleus. The catalysed reaction is O-phospho-L-seryl-[protein] + H2O = L-seryl-[protein] + phosphate. The enzyme catalyses O-phospho-L-threonyl-[protein] + H2O = L-threonyl-[protein] + phosphate. In terms of biological role, involved in the regulation of pedicel length and of CLAVATA pathways controlling stem cell identity at shoot and flower meristems. This chain is Protein phosphatase 2C 29 (PLL1), found in Arabidopsis thaliana (Mouse-ear cress).